We begin with the raw amino-acid sequence, 377 residues long: Cytochrome b (377 aa).

Helical transmembrane passes span 33 to 53 (FGSL…FLAM), 77 to 98 (WLIR…YLHT), 113 to 133 (WTMG…GYVL), and 178 to 198 (FFMI…VHLL). Heme b-binding residues include His83 and His97. Heme b-binding residues include His182 and His196. His201 is an a ubiquinone binding site. 4 consecutive transmembrane segments (helical) span residues 226-246 (YKDL…SLLS), 288-308 (LGGV…PLSS), 320-340 (FNQI…WIGA), and 347-367 (FIIM…LNPM).

Belongs to the cytochrome b family. In terms of assembly, the main subunits of complex b-c1 are: cytochrome b, cytochrome c1 and the Rieske protein. Requires heme b as cofactor.

The protein localises to the mitochondrion inner membrane. Its function is as follows. Component of the ubiquinol-cytochrome c reductase complex (complex III or cytochrome b-c1 complex) that is part of the mitochondrial respiratory chain. The b-c1 complex mediates electron transfer from ubiquinol to cytochrome c. Contributes to the generation of a proton gradient across the mitochondrial membrane that is then used for ATP synthesis. In Tetrodontophora bielanensis (Giant springtail), this protein is Cytochrome b (MT-CYB).